The chain runs to 344 residues: MAASSSEVSEMKGVEDSSNTHSEGPRHSEEGMGPVQVVAENLDQPEALQSGPDTTAAPVDSGPKAELAPETTETPVETPETVQATDLSVNPGEDSKTCPSPKEACQEPASRPEVNREATAEQGAEQQSAAPPEPTSEQALQLNTQSDPQPTSQPPPKPPLQAEPPTQENPTTEVLTESTGEKQENGAVVPLQAGDGEEGPAPQPHSPPSTKTPPANGAPPRVLQKLVEEDRIGRAHGGHPGSPRGSLSRHPSSQLAGPGVEGGEGTQKPRDYIILAILSCFCPMWPVNIVAFAYAVMSRNSLQQGDVDGAQRLGRVAKLLSIVALVGGVLIIIASCVINLGVYK.

Disordered regions lie at residues Met1 to Pro220 and Gly233 to Gly265. Over Met1–Tyr272 the chain is Cytoplasmic. At Ser28 the chain carries Phosphoserine. Positions Pro69–Val82 are enriched in low complexity. Phosphothreonine is present on residues Thr74 and Thr78. The span at Ala124 to Asn143 shows a compositional bias: polar residues. Residues Thr151–Ala162 show a composition bias toward pro residues. Over residues Glu168–Ser178 the composition is skewed to polar residues. Residues Ala201 to Lys211 are compositionally biased toward pro residues. Ser242 carries the post-translational modification Phosphoserine. Position 244 is an omega-N-methylarginine (Arg244). Phosphoserine occurs at positions 252 and 253. The helical intramembrane region spans Ile273–Ala293. The Cytoplasmic segment spans residues Tyr294–Ser321. A helical transmembrane segment spans residues Ile322–Val342. Residues Tyr343–Lys344 lie on the Extracellular side of the membrane.

The protein belongs to the CD225/Dispanin family. In terms of assembly, component of the outer core of AMPAR complex. AMPAR complex consists of an inner core made of 4 pore-forming GluA/GRIA proteins (GRIA1, GRIA2, GRIA3 and GRIA4) and 4 major auxiliary subunits arranged in a twofold symmetry. One of the two pairs of distinct binding sites is occupied either by CNIH2, CNIH3 or CACNG2, CACNG3. The other harbors CACNG2, CACNG3, CACNG4, CACNG8 or GSG1L. This inner core of AMPAR complex is complemented by outer core constituents binding directly to the GluA/GRIA proteins at sites distinct from the interaction sites of the inner core constituents. Outer core constituents include at least PRRT1, PRRT2, CKAMP44/SHISA9, FRRS1L and NRN1. The proteins of the inner and outer core serve as a platform for other, more peripherally associated AMPAR constituents. Alone or in combination, these auxiliary subunits control the gating and pharmacology of the AMPAR complex and profoundly impact their biogenesis and protein processing. Interacts with intersectin 1/ITSN1. Interacts with SNARE complex components, including SNAP25, STX1A, SYT1 and SYT2; this interaction may inhibit SNARE complex formation. In terms of tissue distribution, neuron-specific expression throughout the brain, including hippocampus (at protein level).

The protein resides in the cell membrane. Its subcellular location is the presynaptic cell membrane. The protein localises to the synapse. It is found in the cell projection. It localises to the axon. The protein resides in the cytoplasmic vesicle. Its subcellular location is the secretory vesicle. The protein localises to the synaptic vesicle membrane. It is found in the postsynaptic density membrane. It localises to the dendritic spine. As a component of the outer core of AMPAR complex, may be involved in synaptic transmission in the central nervous system. In hippocampal neurons, in presynaptic terminals, plays an important role in the final steps of neurotransmitter release, possibly by regulating Ca(2+)-sensing. In the cerebellum, may inhibit SNARE complex formation and down-regulate short-term facilitation. The polypeptide is Proline-rich transmembrane protein 2 (Prrt2) (Rattus norvegicus (Rat)).